We begin with the raw amino-acid sequence, 334 residues long: 2,3-bisphosphoglycerate-dependent phosphoglycerate mutase 1 (334 aa).

A chloroplast-targeting transit peptide spans 1-48 (MATATSHQSVVSFASLRSSPSSTISQCGFKIDSSLSFTSKKTNFCKIK). Substrate-binding positions include 84–91 (RHGESLWN), 97–98 (TG), Arg-134, 188–191 (ERMY), Lys-199, 215–216 (RR), and 259–260 (GN). The active-site Tele-phosphohistidine intermediate is the His-85. The active-site Proton donor/acceptor is the Glu-188.

The protein belongs to the phosphoglycerate mutase family. BPG-dependent PGAM subfamily.

The protein localises to the plastid. It is found in the chloroplast. The enzyme catalyses (2R)-2-phosphoglycerate = (2R)-3-phosphoglycerate. The protein operates within carbohydrate degradation; glycolysis; pyruvate from D-glyceraldehyde 3-phosphate: step 3/5. In terms of biological role, catalyzes the interconversion of 2-phosphoglycerate and 3-phosphoglycerate. This Arabidopsis thaliana (Mouse-ear cress) protein is 2,3-bisphosphoglycerate-dependent phosphoglycerate mutase 1.